The following is a 128-amino-acid chain: Small ribosomal subunit protein uS11 (128 aa).

The protein belongs to the universal ribosomal protein uS11 family. Part of the 30S ribosomal subunit. Interacts with proteins S7 and S18. Binds to IF-3.

Functionally, located on the platform of the 30S subunit, it bridges several disparate RNA helices of the 16S rRNA. Forms part of the Shine-Dalgarno cleft in the 70S ribosome. In Chromohalobacter salexigens (strain ATCC BAA-138 / DSM 3043 / CIP 106854 / NCIMB 13768 / 1H11), this protein is Small ribosomal subunit protein uS11.